The primary structure comprises 278 residues: Urease accessory protein UreD (278 aa).

It belongs to the UreD family. In terms of assembly, ureD, UreF and UreG form a complex that acts as a GTP-hydrolysis-dependent molecular chaperone, activating the urease apoprotein by helping to assemble the nickel containing metallocenter of UreC. The UreE protein probably delivers the nickel.

Its subcellular location is the cytoplasm. Required for maturation of urease via the functional incorporation of the urease nickel metallocenter. In Staphylococcus aureus (strain bovine RF122 / ET3-1), this protein is Urease accessory protein UreD.